The following is a 68-amino-acid chain: RICYIAPYDHKTCAAGENICYLKAWCDAWCSSRGKKLEFGCAATCPTVKPGVDISCCDTDNCNPHPKL.

Cystine bridges form between Cys3/Cys20, Cys13/Cys41, Cys26/Cys30, Cys45/Cys56, and Cys57/Cys62.

Belongs to the three-finger toxin family. Long-chain subfamily. Type II alpha-neurotoxin sub-subfamily. As to expression, expressed by the venom gland.

Its subcellular location is the secreted. Functionally, binds with high affinity to muscular (alpha-1/CHRNA1) and neuronal (alpha-7/CHRNA7) nicotinic acetylcholine receptor (nAChR) and inhibits acetylcholine from binding to the receptor, thereby impairing neuromuscular and neuronal transmission. This Aspidelaps scutatus (Shield-nose snake) protein is Long neurotoxin 1.